The following is a 147-amino-acid chain: Secreted hemophore CSA2 (147 aa).

A signal peptide spans M1–A20. The 112-residue stretch at N34–T145 folds into the CFEM domain. 4 disulfides stabilise this stretch: C62/C102, C66/C97, C76/C83, and C85/C118. D80 is a binding site for heme.

This sequence belongs to the RBT5 family. As to quaternary structure, homodimer. The possibility of a transient honotrimer assembly of the holo protein is not ruled out.

The protein localises to the secreted. Secreted heme-binding protein involved in the utilization of iron from human hemoglobin during hyphal growth. May also play a role in non-hemoglobin iron utilization. Heme transfer occurs between PGA7, RBT5 and CSA2 supporting a model in which the 3 CFEM proteins cooperate in a heme-acquisition system and form a cross-cell wall heme-transfer cascade. The ability to acquire iron from host tissues is a major virulence factor of pathogenic microorganisms. This is Secreted hemophore CSA2 (CSA2) from Candida albicans (strain SC5314 / ATCC MYA-2876) (Yeast).